The primary structure comprises 168 residues: uncharacterized protein (168 aa).

The 62-residue stretch at 19 to 80 (LDKLDRHILN…VVSPKAVGRT (62 aa)) folds into the HTH asnC-type domain. The H-T-H motif DNA-binding region spans 38–57 (LKELSEKVNSSVATCQRRVQ).

This is an uncharacterized protein from Haemophilus influenzae (strain ATCC 51907 / DSM 11121 / KW20 / Rd).